We begin with the raw amino-acid sequence, 837 residues long: Endo-1,4-beta-xylanase Z (837 aa).

The signal sequence occupies residues Met-1–Ala-28. Residues Thr-299–Gly-420 form the CBM6 domain. In terms of domain architecture, Dockerin spans Ser-424 to Gly-492. The region spanning Thr-512–Ala-833 is the GH10 domain. Catalysis depends on Glu-645, which acts as the Proton donor. Glu-754 functions as the Nucleophile in the catalytic mechanism. Cys-783 and Cys-789 form a disulfide bridge.

This sequence belongs to the glycosyl hydrolase 10 (cellulase F) family.

The enzyme catalyses Endohydrolysis of (1-&gt;4)-beta-D-xylosidic linkages in xylans.. This Acetivibrio thermocellus (strain ATCC 27405 / DSM 1237 / JCM 9322 / NBRC 103400 / NCIMB 10682 / NRRL B-4536 / VPI 7372) (Clostridium thermocellum) protein is Endo-1,4-beta-xylanase Z (xynZ).